A 313-amino-acid chain; its full sequence is HPr kinase/phosphorylase (313 aa).

Residues H140 and K161 contribute to the active site. 155 to 162 (GNSGAGKS) contributes to the ATP binding site. S162 contributes to the Mg(2+) binding site. Catalysis depends on D179, which acts as the Proton acceptor; for phosphorylation activity. Proton donor; for dephosphorylation activity. Residues 203–212 (IEVRGLGILN) form an important for the catalytic mechanism of both phosphorylation and dephosphorylation region. E204 contacts Mg(2+). R246 is an active-site residue. The segment at 267-272 (PVAAGR) is important for the catalytic mechanism of dephosphorylation.

It belongs to the HPrK/P family. Homohexamer. Requires Mg(2+) as cofactor.

The catalysed reaction is [HPr protein]-L-serine + ATP = [HPr protein]-O-phospho-L-serine + ADP + H(+). It catalyses the reaction [HPr protein]-O-phospho-L-serine + phosphate + H(+) = [HPr protein]-L-serine + diphosphate. In terms of biological role, catalyzes the ATP- as well as the pyrophosphate-dependent phosphorylation of a specific serine residue in HPr, a phosphocarrier protein of the phosphoenolpyruvate-dependent sugar phosphotransferase system (PTS). HprK/P also catalyzes the pyrophosphate-producing, inorganic phosphate-dependent dephosphorylation (phosphorolysis) of seryl-phosphorylated HPr (P-Ser-HPr). The polypeptide is HPr kinase/phosphorylase (Aromatoleum aromaticum (strain DSM 19018 / LMG 30748 / EbN1) (Azoarcus sp. (strain EbN1))).